Reading from the N-terminus, the 368-residue chain is MYRNTMRSASRPVIASLRSSTIRAAPRRFASTAPADKPRSFKGSLVRLGLAFGAVYYYNTSPIFADEAISKTVPAPAAFSDDDLPTVDSIVEEKRKQIKAKSEETAASSKTPESQQSNPQTAAADGSPAALEEEAGQQGAFNPETGEINWDCPCLGGMADGPCGEEFKTAFSCFVFSQEEPKGMDCIDKFQGMQECFKKYPDIYGAELADDEDGAPTPDFGDEQPSGEPTTAEVKSNGELARETKDKTAADATKFDDSQKPAESKTPAKTTSTSTDSAQKPAVDAHRDAEPKSDAETASSGSRMVQDVAIPIEKPVNDKYWQDMHKSEVQKKEVTVGITQAHDATAANEEIKHIERQEAAKKNAEKKQ.

The N-terminal 29 residues, 1–29, are a transit peptide targeting the mitochondrion; the sequence is MYRNTMRSASRPVIASLRSSTIRAAPRRF. Residues 30–47 are Mitochondrial matrix-facing; it reads ASTAPADKPRSFKGSLVR. A helical; Signal-anchor for type II membrane protein membrane pass occupies residues 48–65; the sequence is LGLAFGAVYYYNTSPIFA. The Mitochondrial intermembrane portion of the chain corresponds to 66–368; the sequence is DEAISKTVPA…AAKKNAEKKQ (303 aa). The span at 95–104 shows a compositional bias: basic and acidic residues; sequence RKQIKAKSEE. Residues 95–144 are disordered; that stretch reads RKQIKAKSEETAASSKTPESQQSNPQTAAADGSPAALEEEAGQQGAFNPE. Over residues 105 to 121 the composition is skewed to polar residues; the sequence is TAASSKTPESQQSNPQT. 3 disulfide bridges follow: C152–C154, C163–C196, and C173–C186. A CHCH domain is found at 160–204; the sequence is DGPCGEEFKTAFSCFVFSQEEPKGMDCIDKFQGMQECFKKYPDIY. 2 short sequence motifs (cx9C motif) span residues 163-173 and 186-196; these read CGEEFKTAFSC and CIDKFQGMQEC. The interval 208-310 is disordered; the sequence is LADDEDGAPT…GSRMVQDVAI (103 aa). Residues 240 to 263 show a composition bias toward basic and acidic residues; it reads LARETKDKTAADATKFDDSQKPAE. A compositionally biased stretch (low complexity) spans 264–280; the sequence is SKTPAKTTSTSTDSAQK. Residues 283–295 are compositionally biased toward basic and acidic residues; the sequence is VDAHRDAEPKSDA.

Monomer. Requires Cu(2+) as cofactor. It depends on Zn(2+) as a cofactor.

It localises to the mitochondrion inner membrane. Required for the import and folding of small cysteine-containing proteins (small Tim) in the mitochondrial intermembrane space (IMS). Forms a redox cycle with ERV1 that involves a disulfide relay system. Precursor proteins to be imported into the IMS are translocated in their reduced form into the mitochondria. The oxidized form of MIA40 forms a transient intermolecular disulfide bridge with the reduced precursor protein, resulting in oxidation of the precursor protein that now contains an intramolecular disulfide bond and is able to undergo folding in the IMS. The protein is Mitochondrial intermembrane space import and assembly protein 40 (MIA40) of Gibberella zeae (strain ATCC MYA-4620 / CBS 123657 / FGSC 9075 / NRRL 31084 / PH-1) (Wheat head blight fungus).